Consider the following 1009-residue polypeptide: Mediator of RNA polymerase II transcription subunit 5 (1009 aa).

Belongs to the Mediator complex subunit 5 family. In terms of assembly, component of the Mediator complex.

The protein localises to the nucleus. Component of the Mediator complex, a coactivator involved in the regulated transcription of nearly all RNA polymerase II-dependent genes. Mediator functions as a bridge to convey information from gene-specific regulatory proteins to the basal RNA polymerase II transcription machinery. Mediator is recruited to promoters by direct interactions with regulatory proteins and serves as a scaffold for the assembly of a functional preinitiation complex with RNA polymerase II and the general transcription factors. This Neosartorya fischeri (strain ATCC 1020 / DSM 3700 / CBS 544.65 / FGSC A1164 / JCM 1740 / NRRL 181 / WB 181) (Aspergillus fischerianus) protein is Mediator of RNA polymerase II transcription subunit 5 (nut1).